A 161-amino-acid chain; its full sequence is Nucleotide-binding protein PFL_4775 (161 aa).

It belongs to the YajQ family.

In terms of biological role, nucleotide-binding protein. In Pseudomonas fluorescens (strain ATCC BAA-477 / NRRL B-23932 / Pf-5), this protein is Nucleotide-binding protein PFL_4775.